The sequence spans 298 residues: Glutamyl-Q tRNA(Asp) synthetase (298 aa).

L-glutamate-binding positions include 9–13 (RFAPS) and E45. The short motif at 12-22 (PSPSGELHFGS) is the 'HIGH' region element. C101, C103, Y115, and C119 together coordinate Zn(2+). L-glutamate-binding residues include Y172 and R190. Residues 228–232 (KLSKQ) carry the 'KMSKS' region motif. An ATP-binding site is contributed by K231.

The protein belongs to the class-I aminoacyl-tRNA synthetase family. GluQ subfamily. The cofactor is Zn(2+).

Catalyzes the tRNA-independent activation of glutamate in presence of ATP and the subsequent transfer of glutamate onto a tRNA(Asp). Glutamate is transferred on the 2-amino-5-(4,5-dihydroxy-2-cyclopenten-1-yl) moiety of the queuosine in the wobble position of the QUC anticodon. This Salmonella paratyphi A (strain ATCC 9150 / SARB42) protein is Glutamyl-Q tRNA(Asp) synthetase.